We begin with the raw amino-acid sequence, 505 residues long: Beta-glucosidase 3 (505 aa).

A signal peptide spans 1–22 (MAAAAAFFCALLFISVQHGVLG). The a beta-D-glucoside site is built by Gln-43 and His-143. Glu-189 serves as the catalytic Proton donor. A disulfide bridge connects residues Cys-208 and Cys-217. Asn-221 is a glycosylation site (N-linked (GlcNAc...) asparagine). The a beta-D-glucoside site is built by Tyr-333 and Glu-405. Glu-405 functions as the Nucleophile in the catalytic mechanism. 2 N-linked (GlcNAc...) asparagine glycosylation sites follow: Asn-415 and Asn-436. 2 residues coordinate a beta-D-glucoside: Trp-450 and Tyr-466.

The protein belongs to the glycosyl hydrolase 1 family.

It catalyses the reaction Hydrolysis of terminal, non-reducing beta-D-glucosyl residues with release of beta-D-glucose.. The chain is Beta-glucosidase 3 (BGLU3) from Oryza sativa subsp. japonica (Rice).